Reading from the N-terminus, the 460-residue chain is UDP-N-acetylmuramate--L-alanine ligase (460 aa).

116–122 (GSHGKTT) is an ATP binding site.

This sequence belongs to the MurCDEF family.

Its subcellular location is the cytoplasm. It carries out the reaction UDP-N-acetyl-alpha-D-muramate + L-alanine + ATP = UDP-N-acetyl-alpha-D-muramoyl-L-alanine + ADP + phosphate + H(+). The protein operates within cell wall biogenesis; peptidoglycan biosynthesis. Functionally, cell wall formation. The sequence is that of UDP-N-acetylmuramate--L-alanine ligase from Caldanaerobacter subterraneus subsp. tengcongensis (strain DSM 15242 / JCM 11007 / NBRC 100824 / MB4) (Thermoanaerobacter tengcongensis).